A 134-amino-acid chain; its full sequence is ATP synthase epsilon chain (134 aa).

Belongs to the ATPase epsilon chain family. F-type ATPases have 2 components, CF(1) - the catalytic core - and CF(0) - the membrane proton channel. CF(1) has five subunits: alpha(3), beta(3), gamma(1), delta(1), epsilon(1). CF(0) has three main subunits: a, b and c.

Its subcellular location is the cell membrane. Its function is as follows. Produces ATP from ADP in the presence of a proton gradient across the membrane. The polypeptide is ATP synthase epsilon chain (Alkaliphilus oremlandii (strain OhILAs) (Clostridium oremlandii (strain OhILAs))).